A 160-amino-acid polypeptide reads, in one-letter code: Cyclic pyranopterin monophosphate synthase (160 aa).

Substrate-binding positions include 75-77 (MCH) and 115-116 (ME). Aspartate 130 is an active-site residue.

The protein belongs to the MoaC family. Homohexamer; trimer of dimers.

The enzyme catalyses (8S)-3',8-cyclo-7,8-dihydroguanosine 5'-triphosphate = cyclic pyranopterin phosphate + diphosphate. It functions in the pathway cofactor biosynthesis; molybdopterin biosynthesis. Catalyzes the conversion of (8S)-3',8-cyclo-7,8-dihydroguanosine 5'-triphosphate to cyclic pyranopterin monophosphate (cPMP). In Lysinibacillus sphaericus (strain C3-41), this protein is Cyclic pyranopterin monophosphate synthase.